A 328-amino-acid chain; its full sequence is Extracellular exo-alpha-(1-&gt;5)-L-arabinofuranosidase (328 aa).

Positions 1-43 form a signal peptide, tat-tyPE signal; that stretch reads MCTREAVRMSREHDLPEIPSRRLLLKGAAAAGALTAVPGVAHA. Asp-60 functions as the Proton acceptor in the catalytic mechanism. The Proton donor role is filled by Glu-236.

It belongs to the glycosyl hydrolase 43 family. In terms of processing, predicted to be exported by the Tat system. The position of the signal peptide cleavage has been experimentally proven.

It localises to the secreted. The catalysed reaction is Hydrolysis of terminal non-reducing alpha-L-arabinofuranoside residues in alpha-L-arabinosides.. It functions in the pathway glycan metabolism; L-arabinan degradation. In terms of biological role, involved in the degradation of arabinan and is a key enzyme in the complete degradation of the plant cell wall. Catalyzes only the cleavage of terminal alpha-(1-&gt;5) arabinofuranosyl bonds of arabinan present in the arabinofuranosyl polysaccharides or oligosaccharides. It cannot act on other arabinose-containing polysaccharides and arabinoxylo-oligosaccharides. The sequence is that of Extracellular exo-alpha-(1-&gt;5)-L-arabinofuranosidase from Streptomyces chartreusis.